Here is an 84-residue protein sequence, read N- to C-terminus: Small ribosomal subunit protein uS17 (84 aa).

The protein belongs to the universal ribosomal protein uS17 family. In terms of assembly, part of the 30S ribosomal subunit.

In terms of biological role, one of the primary rRNA binding proteins, it binds specifically to the 5'-end of 16S ribosomal RNA. The chain is Small ribosomal subunit protein uS17 from Treponema pallidum (strain Nichols).